The sequence spans 582 residues: MESVKQRILTPGKEGLKNFAGKSLGQIYRVLEKKQDAGETIELTEDGKPLEVPEKKAPLCDCTCFGLPRRYIIAIMSGLGFCISFGIRCNLGVAIVDMVNNSTIHRGGKVIKEKAKFNWDPETVGMIHGSFFWGYIITQIPGGYIASRLAANRVFGAAILLTSTLNMLIPSAARVHYGCVIFVRILQGLVEGVTYPACHGIWSKWAPPLERSRLATTSFCGSYAGAVIAMPLAGILVQYTGWSSVFYVYGSFGMIWYMFWLLVSYESPAKHPTITDEERRYIEESIGESANLLGAMEKFKTPWRKFFTSMPVYAIIVANFCRSWTFYLLLISQPAYFEEVFGFEISKVGMLSAVPHLVMTIIVPIGGQIADFLRSKQILSTTTVRKIMNCGGFGMEATLLLVVGYSHTRGVAISFLVLAVGFSGFAISGFNVNHLDIAPRYASILMGISNGVGTLSGMVCPIIVGAMTKNKSREEWQYVFLIAALVHYGGVIFYAIFASGEKQPWADPEETSEEKCGFIHEDELDEETGDITQNYINYGTTKSYGATTQANGGWPNGWEKKEEFVQEEVQNSYNYKDRDDYS.

Over 1–71 (MESVKQRILT…CTCFGLPRRY (71 aa)) the chain is Cytoplasmic. A helical membrane pass occupies residues 72 to 92 (IIAIMSGLGFCISFGIRCNLG). Over 93–125 (VAIVDMVNNSTIHRGGKVIKEKAKFNWDPETVG) the chain is Vesicular. Asn-100 and Asn-101 each carry an N-linked (GlcNAc...) asparagine glycan. A helical transmembrane segment spans residues 126 to 146 (MIHGSFFWGYIITQIPGGYIA). At 147-148 (SR) the chain is on the cytoplasmic side. Residues 149-169 (LAANRVFGAAILLTSTLNMLI) traverse the membrane as a helical segment. Over 170–177 (PSAARVHY) the chain is Vesicular. The chain crosses the membrane as a helical span at residues 178 to 198 (GCVIFVRILQGLVEGVTYPAC). At 199–216 (HGIWSKWAPPLERSRLAT) the chain is on the cytoplasmic side. Residues 217–237 (TSFCGSYAGAVIAMPLAGILV) traverse the membrane as a helical segment. The Vesicular portion of the chain corresponds to 238–244 (QYTGWSS). A helical transmembrane segment spans residues 245 to 265 (VFYVYGSFGMIWYMFWLLVSY). At 266–310 (ESPAKHPTITDEERRYIEESIGESANLLGAMEKFKTPWRKFFTSM) the chain is on the cytoplasmic side. The helical transmembrane segment at 311-331 (PVYAIIVANFCRSWTFYLLLI) threads the bilayer. Topologically, residues 332 to 349 (SQPAYFEEVFGFEISKVG) are vesicular. The chain crosses the membrane as a helical span at residues 350 to 370 (MLSAVPHLVMTIIVPIGGQIA). Topologically, residues 371–386 (DFLRSKQILSTTTVRK) are cytoplasmic. Residues 387 to 407 (IMNCGGFGMEATLLLVVGYSH) form a helical membrane-spanning segment. Residues 408–409 (TR) lie on the Vesicular side of the membrane. The helical transmembrane segment at 410–430 (GVAISFLVLAVGFSGFAISGF) threads the bilayer. Topologically, residues 431–443 (NVNHLDIAPRYAS) are cytoplasmic. Residues 444 to 464 (ILMGISNGVGTLSGMVCPIIV) traverse the membrane as a helical segment. Topologically, residues 465–477 (GAMTKNKSREEWQ) are vesicular. A glycan (N-linked (GlcNAc...) asparagine) is linked at Asn-470. Residues 478-498 (YVFLIAALVHYGGVIFYAIFA) traverse the membrane as a helical segment. The Cytoplasmic segment spans residues 499-582 (SGEKQPWADP…YNYKDRDDYS (84 aa)).

This sequence belongs to the major facilitator superfamily. Sodium/anion cotransporter family. VGLUT subfamily.

Its subcellular location is the cytoplasmic vesicle. It localises to the secretory vesicle. It is found in the synaptic vesicle membrane. The protein localises to the synapse. The protein resides in the synaptosome. Its subcellular location is the cell membrane. The catalysed reaction is L-glutamate(out) = L-glutamate(in). It catalyses the reaction 3 Na(+)(out) + phosphate(out) = 3 Na(+)(in) + phosphate(in). It carries out the reaction phosphate(in) = phosphate(out). The enzyme catalyses K(+)(in) + H(+)(out) = K(+)(out) + H(+)(in). The catalysed reaction is chloride(in) = chloride(out). Its activity is regulated as follows. Chloride channel activity is allosterically activated by lumenal H(+) and Cl(-) leading to synaptic vesicles acidification. The L-glutamate transport activity is allosterically activated by lumenal H(+) and Cl(-). The allosteric requirement for H(+) efficiently prevents non-vesicular efflux across the plasma membrane. The L-glutamate uniporter activity exhibits a biphasic dependence on chloride concentration. Multifunctional transporter that transports L-glutamate as well as multiple ions such as chloride, proton, potassium, sodium and phosphate. At the synaptic vesicle membrane, mainly functions as a uniporter which transports preferentially L-glutamate but also, phosphate from the cytoplasm into synaptic vesicles at presynaptic nerve terminals of excitatory neural cells. The L-glutamate or phosphate uniporter activity is electrogenic and is driven by the proton electrochemical gradient, mainly by the electrical gradient established by the vacuolar H(+)-ATPase across the synaptic vesicle membrane. In addition, functions as a chloride channel that allows a chloride permeation through the synaptic vesicle membrane therefore affects the proton electrochemical gradient and promotes synaptic vesicles acidification. Moreover, functions as a vesicular K(+)/H(+) antiport allowing to maintain the electrical gradient and to decrease chemical gradient and therefore sustain vesicular L-glutamate uptake. The vesicular H(+)/H(+) antiport activity is electroneutral. At the plasma membrane, following exocytosis, functions as a symporter of Na(+) and phosphate from the extracellular space to the cytoplasm allowing synaptic phosphate homeostasis regulation. The symporter activity is driven by an inside negative membrane potential and is electrogenic. Also involved in the regulation of retinal hyaloid vessel regression during postnatal development. May also play a role in the endocrine L-glutamatergic system of other tissues such as pineal gland and pancreas. The sequence is that of Vesicular glutamate transporter 2 from Bos taurus (Bovine).